A 203-amino-acid chain; its full sequence is Probable chemoreceptor glutamine deamidase CheD (203 aa).

This sequence belongs to the CheD family.

The enzyme catalyses L-glutaminyl-[protein] + H2O = L-glutamyl-[protein] + NH4(+). In terms of biological role, probably deamidates glutamine residues to glutamate on methyl-accepting chemotaxis receptors (MCPs), playing an important role in chemotaxis. The chain is Probable chemoreceptor glutamine deamidase CheD from Methylobacillus flagellatus (strain ATCC 51484 / DSM 6875 / VKM B-1610 / KT).